The chain runs to 180 residues: tRNA (cytidine(56)-2'-O)-methyltransferase (180 aa).

Residues leucine 84 and 112-116 (GAEKV) contribute to the S-adenosyl-L-methionine site.

Belongs to the aTrm56 family. In terms of assembly, homodimer.

The protein resides in the cytoplasm. The enzyme catalyses cytidine(56) in tRNA + S-adenosyl-L-methionine = 2'-O-methylcytidine(56) in tRNA + S-adenosyl-L-homocysteine + H(+). Its function is as follows. Specifically catalyzes the AdoMet-dependent 2'-O-ribose methylation of cytidine at position 56 in tRNAs. The protein is tRNA (cytidine(56)-2'-O)-methyltransferase of Haloarcula marismortui (strain ATCC 43049 / DSM 3752 / JCM 8966 / VKM B-1809) (Halobacterium marismortui).